A 202-amino-acid chain; its full sequence is Dephospho-CoA kinase (202 aa).

Positions 5 to 202 (ILGLTGGIGS…FYLTLRGGQP (198 aa)) constitute a DPCK domain. An ATP-binding site is contributed by 13–18 (GSGKSA).

The protein belongs to the CoaE family.

The protein localises to the cytoplasm. The enzyme catalyses 3'-dephospho-CoA + ATP = ADP + CoA + H(+). It participates in cofactor biosynthesis; coenzyme A biosynthesis; CoA from (R)-pantothenate: step 5/5. Functionally, catalyzes the phosphorylation of the 3'-hydroxyl group of dephosphocoenzyme A to form coenzyme A. The sequence is that of Dephospho-CoA kinase from Stutzerimonas stutzeri (Pseudomonas stutzeri).